Consider the following 803-residue polypeptide: Palmitoyl thioesterase CPT1C (803 aa).

The Cytoplasmic segment spans residues 1–52; sequence MAEAHQAVGFRPSLTSDGAEVELSAPVLQEIYLSGLRSWKRHLSRFWNDFLT. A helical transmembrane segment spans residues 53–75; sequence GVFPASPLSWLFLFSAIQLAWFL. Over 76–103 the chain is Lumenal; it reads QLDPSLGLMEKIKELLPDWGGQHHGLRG. A helical transmembrane segment spans residues 104–126; the sequence is VLAAALFASCLWGALIFTLHVAL. Residues 127–803 lie on the Cytoplasmic side of the membrane; that stretch reads RLLLSYHGWL…SKASMTSTDF (677 aa). H470 acts as the Proton acceptor in catalysis. 552 to 564 lines the CoA pocket; sequence GKSFIRRCHLSSD. Positions 586, 588, and 599 each coordinate (R)-carnitine. Residues 761-803 are required for interaction with GRIA1; the sequence is LFQAGQHFKRRFRGSGKENSRHRCGFLSRQTGASKASMTSTDF. Residues 772–803 are disordered; sequence FRGSGKENSRHRCGFLSRQTGASKASMTSTDF. Polar residues predominate over residues 788-803; the sequence is SRQTGASKASMTSTDF.

The protein belongs to the carnitine/choline acetyltransferase family. Peripherally associated with AMPAR complex. AMPAR complex consists of an inner core made of 4 pore-forming GluA/GRIA proteins (GRIA1, GRIA2, GRIA3 and GRIA4) and 4 major auxiliary subunits arranged in a twofold symmetry. One of the two pairs of distinct binding sites is occupied either by CNIH2, CNIH3 or CACNG2, CACNG3. The other harbors CACNG2, CACNG3, CACNG4, CACNG8 or GSG1L. This inner core of AMPAR complex is complemented by outer core constituents binding directly to the GluA/GRIA proteins at sites distinct from the interaction sites of the inner core constituents. Outer core constituents include at least PRRT1, PRRT2, CKAMP44/SHISA9, FRRS1L and NRN1. The proteins of the inner and outer core serve as a platform for other, more peripherally associated AMPAR constituents, including CPT1C. Alone or in combination, these auxiliary subunits control the gating and pharmacology of the AMPAR complex and profoundly impact their biogenesis and protein processing. Interacts with SACM1L; the interaction regulates SACM1L phosphatidylinositol-3-phosphatase activity and translocation to endoplasmic reticulum/trans Golgi network in a malonyl-CoA dependent manner. Interacts with ATL1. As to expression, expressed predominantly in brain and testis. Expressed in motor neurons.

The protein resides in the cell projection. It is found in the dendrite. The protein localises to the axon. It localises to the endoplasmic reticulum membrane. It catalyses the reaction S-hexadecanoyl-L-cysteinyl-[protein] + H2O = L-cysteinyl-[protein] + hexadecanoate + H(+). In terms of biological role, palmitoyl thioesterase specifically expressed in the endoplasmic reticulum of neurons. Modulates the trafficking of the glutamate receptor, AMPAR, to plasma membrane through depalmitoylation of GRIA1. Also regulates AMPR trafficking through the regulation of SACM1L phosphatidylinositol-3-phosphatase activity by interaction in a malonyl-CoA dependent manner. Binds malonyl-CoA and couples malonyl-CoA to ceramide levels, necessary for proper spine maturation and contributing to systemic energy homeostasis and appetite control. Binds to palmitoyl-CoA, but does not have carnitine palmitoyltransferase 1 catalytic activity or at very low levels. This is Palmitoyl thioesterase CPT1C from Homo sapiens (Human).